The chain runs to 178 residues: Small ribosomal subunit protein uS5 (178 aa).

Residues 15–78 (FEEKIIEIRR…SAAKRNIIEV (64 aa)) form the S5 DRBM domain.

This sequence belongs to the universal ribosomal protein uS5 family. Part of the 30S ribosomal subunit. Contacts proteins S4 and S8.

In terms of biological role, with S4 and S12 plays an important role in translational accuracy. Functionally, located at the back of the 30S subunit body where it stabilizes the conformation of the head with respect to the body. The polypeptide is Small ribosomal subunit protein uS5 (Thermotoga sp. (strain RQ2)).